Reading from the N-terminus, the 790-residue chain is MAATTANPEMTSDVPSLGPNITSGNPGPAIQGGGTIVQRAVKRRPGLDFDDDGEGNSKFLRCDEDQMSNDKERFARSDDEQSSADKERLARENHSEIERRRRNKMTAYITELSDIVPTCSALARKPDKLTILRMAVSHMKSLRGTGNTSTDGSYKPSFLTDQELKHLILEAADGFLFIVSCETGRVVYVSDSVTPVLNQPQSEWFGSTLYDQVHPDDVDKLREQLSTSENALTGRILDLKTGTVKKEGQQSSMRMCMGSRRSFICRMRCGNSSVDPVSMNRLSFVRNRCRNGLGSVKDGEPHFVVVHCTGYIKAWPPAGVSLPDDDPEAGQGSKFCLVAIGRLQVTSSPNCTDMSNVCQPTEFISRHNIEGIFTFVDHRCVATVGYQPQELLGKNIVEFCHPEDQQLLRDSFQQVVKLKGQVLSVMFRFRSKNREWLWTRTSSFTFQNPYSDEIEYIICTNTNVKNSSQEPRPTLSNPIQRPQLGPTANLPLEVGSGQLAPRQQQQQTELDMVPGRDGLTNYNHSQISVQPVATTGPEHGKPLEKSDSLFAQDRDPRFSEMYSNINADQSKGISSSTVPATQQLFSQGNTFPPNPRPAENFRNSGLAPPVTIVQASASAGEMLAQISRHSNPTQGTAPTWTPSTRPGFSAQQVASQATTKSRSSQFGVGNFQSPSSFSSMSLSSTSTASSGAAAYPSLTSRGSNFAPETGQTAGQFQTRTAEGVGVWPQWQGQQPHHRSTSSEQHVQQPSTQQPNQPEVFQEMLSMLGDQSSSYNNEEFPDLTMFPSFSE.

A compositionally biased stretch (polar residues) spans 1–25 (MAATTANPEMTSDVPSLGPNITSGN). Residues 1–98 (MAATTANPEM…LARENHSEIE (98 aa)) form a disordered region. Position 2 is an N-acetylalanine (A2). K58 participates in a covalent cross-link: Glycyl lysine isopeptide (Lys-Gly) (interchain with G-Cter in SUMO2). The segment covering 60–98 (LRCDEDQMSNDKERFARSDDEQSSADKERLARENHSEIE) has biased composition (basic and acidic residues). A Phosphoserine modification is found at S77. Positions 88-128 (RLARENHSEIERRRRNKMTAYITELSDIVPTCSALARKPDK) are DNA-binding. A bHLH domain is found at 89 to 142 (LARENHSEIERRRRNKMTAYITELSDIVPTCSALARKPDKLTILRMAVSHMKSL). A required for heterodimer formation with HIF1A region spans residues 112 to 168 (LSDIVPTCSALARKPDKLTILRMAVSHMKSLRGTGNTSTDGSYKPSFLTDQELKHLI). A required for heterodimer formation with EPAS1 region spans residues 112-264 (LSDIVPTCSA…MCMGSRRSFI (153 aa)). PAS domains follow at residues 161-235 (DQEL…LTGR) and 349-419 (PNCT…VKLK). Residues 167 to 171 (LILEA) form a mediates the transcription activity and dimerization of the AHR:ARNT complex region. Positions 424–467 (SVMFRFRSKNREWLWTRTSSFTFQNPYSDEIEYIICTNTNVKNS) constitute a PAC domain. 2 stretches are compositionally biased toward polar residues: residues 465 to 480 (KNSS…NPIQ) and 629 to 672 (HSNP…GNFQ). Disordered regions lie at residues 465-494 (KNSS…PLEV), 629-695 (HSNP…AAAY), and 729-790 (QWQG…SFSE). The segment covering 673–695 (SPSSFSSMSLSSTSTASSGAAAY) has biased composition (low complexity). The span at 741-758 (SSEQHVQQPSTQQPNQPE) shows a compositional bias: polar residues.

In terms of assembly, monomer. Homodimer only upon binding to a DNA. Efficient DNA binding requires dimerization with another bHLH protein. Interacts with TACC3. Interacts with HIF1A, EPAS1, NPAS1 and NPAS3; forms a heterodimer that binds core DNA sequence 5'-TACGTG-3' within the hypoxia response element (HRE) of target gene promoters. Forms a heterodimer with AHRR, as well as with other bHLH proteins. Interacts with NOCA7. Interacts with TACC3. Interacts with AHR; the heterodimer ARNT:AHR binds to core DNA sequence 5'-TGCGTG-3' within the dioxin response element (DRE) of target gene promoters and activates their transcription. Interacts with SIM1 and NPAS4. As to expression, was expressed at almost the same level in all tissues except for the heart, liver, and small intestine.

The protein resides in the nucleus. Required for activity of the AHR. Upon ligand binding, AHR translocates into the nucleus, where it heterodimerizes with ARNT and induces transcription by binding to xenobiotic response elements (XRE). Not required for the ligand-binding subunit to translocate from the cytosol to the nucleus after ligand binding. The complex initiates transcription of genes involved in the regulation of a variety of biological processes, including angiogenesis, hematopoiesis, drug and lipid metabolism, cell motility and immune modulation. The heterodimer binds to core DNA sequence 5'-TACGTG-3' within the hypoxia response element (HRE) of target gene promoters and functions as a transcriptional regulator of the adaptive response to hypoxia. The heterodimer ARNT:AHR binds to core DNA sequence 5'-TGCGTG-3' within the dioxin response element (DRE) of target gene promoters and activates their transcription. The polypeptide is Aryl hydrocarbon receptor nuclear translocator (ARNT) (Oryctolagus cuniculus (Rabbit)).